A 316-amino-acid polypeptide reads, in one-letter code: Sulfate adenylyltransferase subunit 2 (316 aa).

The tract at residues 297 to 316 (RAIDRDQSGSMEKKKREGYF) is disordered.

Belongs to the PAPS reductase family. CysD subfamily. In terms of assembly, heterodimer composed of CysD, the smaller subunit, and CysN.

The catalysed reaction is sulfate + ATP + H(+) = adenosine 5'-phosphosulfate + diphosphate. Its pathway is sulfur metabolism; hydrogen sulfide biosynthesis; sulfite from sulfate: step 1/3. Functionally, with CysN forms the ATP sulfurylase (ATPS) that catalyzes the adenylation of sulfate producing adenosine 5'-phosphosulfate (APS) and diphosphate, the first enzymatic step in sulfur assimilation pathway. APS synthesis involves the formation of a high-energy phosphoric-sulfuric acid anhydride bond driven by GTP hydrolysis by CysN coupled to ATP hydrolysis by CysD. This chain is Sulfate adenylyltransferase subunit 2, found in Allorhizobium ampelinum (strain ATCC BAA-846 / DSM 112012 / S4) (Agrobacterium vitis (strain S4)).